The following is a 100-amino-acid chain: Large ribosomal subunit protein bL28 (100 aa).

It belongs to the bacterial ribosomal protein bL28 family.

This chain is Large ribosomal subunit protein bL28, found in Ehrlichia ruminantium (strain Gardel).